The following is a 547-amino-acid chain: Chaperonin GroEL 1 (547 aa).

Residues 30–33 (TLGP), Lys51, 87–91 (DGTTT), Gly415, and Asp494 each bind ATP. Positions 524–547 (PKGKAKGGGAGAGMPDYGGDDMDY) are disordered.

This sequence belongs to the chaperonin (HSP60) family. Forms a cylinder of 14 subunits composed of two heptameric rings stacked back-to-back. Interacts with the co-chaperonin GroES.

Its subcellular location is the cytoplasm. The catalysed reaction is ATP + H2O + a folded polypeptide = ADP + phosphate + an unfolded polypeptide.. Together with its co-chaperonin GroES, plays an essential role in assisting protein folding. The GroEL-GroES system forms a nano-cage that allows encapsulation of the non-native substrate proteins and provides a physical environment optimized to promote and accelerate protein folding. The polypeptide is Chaperonin GroEL 1 (Myxococcus xanthus (strain DK1622)).